A 251-amino-acid polypeptide reads, in one-letter code: Phosphoribosylaminoimidazole-succinocarboxamide synthase (251 aa).

This sequence belongs to the SAICAR synthetase family.

It carries out the reaction 5-amino-1-(5-phospho-D-ribosyl)imidazole-4-carboxylate + L-aspartate + ATP = (2S)-2-[5-amino-1-(5-phospho-beta-D-ribosyl)imidazole-4-carboxamido]succinate + ADP + phosphate + 2 H(+). The protein operates within purine metabolism; IMP biosynthesis via de novo pathway; 5-amino-1-(5-phospho-D-ribosyl)imidazole-4-carboxamide from 5-amino-1-(5-phospho-D-ribosyl)imidazole-4-carboxylate: step 1/2. This is Phosphoribosylaminoimidazole-succinocarboxamide synthase from Phenylobacterium zucineum (strain HLK1).